A 166-amino-acid polypeptide reads, in one-letter code: Probable RNA-binding protein EIF1AD (166 aa).

Residues 5 to 89 (TKRKHVVKEV…VKAEISFVLC (85 aa)) enclose the S1-like domain. The short motif at 6–12 (KRKHVVK) is the Nuclear localization signal element. T33 bears the Phosphothreonine mark. The short motif at 56-65 (KYRKNIWIKR) is the Nuclear localization signal element. Residues 114 to 166 (NNNRNRQTQPELPAEPQLSGEESSSEDDSDLFVNTNRRQYRESEEESEEEEAA) form a disordered region. S132, S136, S137, S138, S156, and S160 each carry phosphoserine. Over residues 156-166 (SEEESEEEEAA) the composition is skewed to acidic residues.

This sequence belongs to the EIF1AD family. In terms of assembly, interacts with GAPDH and STAT1.

Its subcellular location is the nucleus. Functionally, plays a role into cellular response to oxidative stress. Decreases cell proliferation. In Pongo abelii (Sumatran orangutan), this protein is Probable RNA-binding protein EIF1AD (EIF1AD).